The sequence spans 252 residues: Curing of [URE3] protein 1 (252 aa).

The protein localises to the nucleus. Functionally, involved in the curing of prion [URE3]. Nuclear localization of this protein may suggest a role in transcription regulation, so it might exert an effect on [URE3] through known prion-curing chaperones or BTN2. This is Curing of [URE3] protein 1 (CUR1) from Saccharomyces cerevisiae (strain ATCC 204508 / S288c) (Baker's yeast).